The sequence spans 365 residues: Phospho-N-acetylmuramoyl-pentapeptide-transferase (365 aa).

11 helical membrane-spanning segments follow: residues 15–35 (WPAA…DRLI), 39–59 (LLSL…WWGV), 84–104 (GTPT…GGLV), 114–134 (LLAI…DDWS), 156–176 (AAVL…TVSL), 178–198 (FNLD…VFLA), 209–229 (LDGL…LQLM), 235–255 (GDPA…GFLI), 263–283 (VFMG…VALL), 291–311 (LLMG…VWVF), and 343–363 (VVVP…LGLH).

It belongs to the glycosyltransferase 4 family. MraY subfamily. Requires Mg(2+) as cofactor.

It localises to the cell inner membrane. It catalyses the reaction UDP-N-acetyl-alpha-D-muramoyl-L-alanyl-gamma-D-glutamyl-meso-2,6-diaminopimeloyl-D-alanyl-D-alanine + di-trans,octa-cis-undecaprenyl phosphate = di-trans,octa-cis-undecaprenyl diphospho-N-acetyl-alpha-D-muramoyl-L-alanyl-D-glutamyl-meso-2,6-diaminopimeloyl-D-alanyl-D-alanine + UMP. It participates in cell wall biogenesis; peptidoglycan biosynthesis. Its function is as follows. Catalyzes the initial step of the lipid cycle reactions in the biosynthesis of the cell wall peptidoglycan: transfers peptidoglycan precursor phospho-MurNAc-pentapeptide from UDP-MurNAc-pentapeptide onto the lipid carrier undecaprenyl phosphate, yielding undecaprenyl-pyrophosphoryl-MurNAc-pentapeptide, known as lipid I. In Synechococcus sp. (strain WH7803), this protein is Phospho-N-acetylmuramoyl-pentapeptide-transferase.